Consider the following 452-residue polypeptide: Ribosomal protein uS12 methylthiotransferase RimO (452 aa).

One can recognise an MTTase N-terminal domain in the interval L3–D122. Residues C12, C48, C85, C162, C166, and C169 each coordinate [4Fe-4S] cluster. Positions L148–E392 constitute a Radical SAM core domain. Residues Q395–E452 form the TRAM domain.

This sequence belongs to the methylthiotransferase family. RimO subfamily. [4Fe-4S] cluster is required as a cofactor.

The protein localises to the cytoplasm. It catalyses the reaction L-aspartate(89)-[ribosomal protein uS12]-hydrogen + (sulfur carrier)-SH + AH2 + 2 S-adenosyl-L-methionine = 3-methylsulfanyl-L-aspartate(89)-[ribosomal protein uS12]-hydrogen + (sulfur carrier)-H + 5'-deoxyadenosine + L-methionine + A + S-adenosyl-L-homocysteine + 2 H(+). Functionally, catalyzes the methylthiolation of an aspartic acid residue of ribosomal protein uS12. The chain is Ribosomal protein uS12 methylthiotransferase RimO from Akkermansia muciniphila (strain ATCC BAA-835 / DSM 22959 / JCM 33894 / BCRC 81048 / CCUG 64013 / CIP 107961 / Muc).